A 403-amino-acid chain; its full sequence is S-adenosylmethionine synthase (403 aa).

His-17 provides a ligand contact to ATP. Asp-19 contacts Mg(2+). Glu-45 contacts K(+). Glu-58 and Gln-104 together coordinate L-methionine. Residues 104-114 form a flexible loop region; sequence QSPDIAQGVDT. Residues 179–181, 250–251, Asp-259, 265–266, Ala-282, and Lys-286 contribute to the ATP site; these read DGK, KF, and RK. Position 259 (Asp-259) interacts with L-methionine. Lys-290 provides a ligand contact to L-methionine.

This sequence belongs to the AdoMet synthase family. As to quaternary structure, homotetramer; dimer of dimers. It depends on Mg(2+) as a cofactor. Requires K(+) as cofactor.

Its subcellular location is the cytoplasm. The catalysed reaction is L-methionine + ATP + H2O = S-adenosyl-L-methionine + phosphate + diphosphate. It functions in the pathway amino-acid biosynthesis; S-adenosyl-L-methionine biosynthesis; S-adenosyl-L-methionine from L-methionine: step 1/1. Catalyzes the formation of S-adenosylmethionine (AdoMet) from methionine and ATP. The overall synthetic reaction is composed of two sequential steps, AdoMet formation and the subsequent tripolyphosphate hydrolysis which occurs prior to release of AdoMet from the enzyme. This Mycobacterium ulcerans (strain Agy99) protein is S-adenosylmethionine synthase.